The sequence spans 940 residues: UvrABC system protein A (940 aa).

31–38 is a binding site for ATP; the sequence is GLSGSGKS. The C4-type zinc finger occupies 253–280; it reads CPICGYSMRELEPRLFSFNNPAGACPTC. ABC transporter domains follow at residues 310 to 587 and 607 to 937; these read WDRR…PESL and ANPE…RFLK. 640–647 contacts ATP; the sequence is GVSGSGKS. Residues 740-766 form a C4-type zinc finger; it reads CEACQGDGVIKVEMHFLPDIYVPCDQC.

It belongs to the ABC transporter superfamily. UvrA family. In terms of assembly, forms a heterotetramer with UvrB during the search for lesions.

The protein resides in the cytoplasm. In terms of biological role, the UvrABC repair system catalyzes the recognition and processing of DNA lesions. UvrA is an ATPase and a DNA-binding protein. A damage recognition complex composed of 2 UvrA and 2 UvrB subunits scans DNA for abnormalities. When the presence of a lesion has been verified by UvrB, the UvrA molecules dissociate. This chain is UvrABC system protein A, found in Escherichia coli O6:H1 (strain CFT073 / ATCC 700928 / UPEC).